A 262-amino-acid chain; its full sequence is 4-hydroxy-2-oxo-heptane-1,7-dioate aldolase (262 aa).

The active-site Proton acceptor is H45. A substrate-binding site is contributed by Q147. A divalent metal cation is bound at residue E149. Substrate is bound by residues A174 and D175. Position 175 (D175) interacts with a divalent metal cation.

Belongs to the HpcH/HpaI aldolase family. Homohexamer; trimer of dimers. A divalent metal cation serves as cofactor.

The enzyme catalyses 4-hydroxy-2-oxoheptanedioate = succinate semialdehyde + pyruvate. It carries out the reaction D-glyceraldehyde + 3-hydroxypyruvate = (3R,4S,5R)-3,4,5,6-tetrahydroxy-2-oxohexanoate. It catalyses the reaction D-glyceraldehyde + 3-hydroxypyruvate = 2-dehydro-D-gluconate. The catalysed reaction is D-glyceraldehyde + 3-hydroxypyruvate = 2-dehydro-D-galactonate. The enzyme catalyses D-glyceraldehyde + pyruvate = 2-dehydro-3-deoxy-L-galactonate. It carries out the reaction 2-dehydro-3-deoxy-D-gluconate = D-glyceraldehyde + pyruvate. Its pathway is aromatic compound metabolism; 4-hydroxyphenylacetate degradation; pyruvate and succinate semialdehyde from 4-hydroxyphenylacetate: step 7/7. Catalyzes the reversible retro-aldol cleavage of 4-hydroxy-2-ketoheptane-1,7-dioate (HKHD) to pyruvate and succinic semialdehyde. In vitro, can catalyze the aldolisation reaction between hydroxypyruvate (HPA) or pyruvate (PA) and D-glyceraldehyde (D-GA). The condensation of hydroxypyruvate and D-glyceraldehyde produces (3R,4S,5R)-3,4,5,6-tetrahydroxy-2-oxohexanoate as the major product, 2-dehydro-D-gluconate and 2-dehydro-D-galactonate. The condensation of pyruvate and D-glyceraldehyde produces 2-dehydro-3-deoxy-L-galactonate as the major product and 2-dehydro-3-deoxy-D-gluconate. The protein is 4-hydroxy-2-oxo-heptane-1,7-dioate aldolase of Escherichia coli (strain ATCC 8739 / DSM 1576 / NBRC 3972 / NCIMB 8545 / WDCM 00012 / Crooks).